Consider the following 513-residue polypeptide: V-type proton ATPase subunit B (513 aa).

Arg375 is a binding site for ATP. The segment covering 484–503 has biased composition (basic and acidic residues); the sequence is ADRKGKGKDKPTTKDTRDTA. Positions 484–513 are disordered; that stretch reads ADRKGKGKDKPTTKDTRDTAAPEEENLIDA. Positions 504–513 are enriched in acidic residues; it reads APEEENLIDA.

It belongs to the ATPase alpha/beta chains family. In terms of assembly, V-ATPase is a heteromultimeric enzyme composed of a peripheral catalytic V1 complex (components A to H) attached to an integral membrane V0 proton pore complex (components: a, c, c', c'', d, e, f and VOA1).

Its subcellular location is the vacuole membrane. Functionally, non-catalytic subunit of the V1 complex of vacuolar(H+)-ATPase (V-ATPase), a multisubunit enzyme composed of a peripheral complex (V1) that hydrolyzes ATP and a membrane integral complex (V0) that translocates protons. V-ATPase is responsible for acidifying and maintaining the pH of intracellular compartments. The sequence is that of V-type proton ATPase subunit B from Neurospora crassa (strain ATCC 24698 / 74-OR23-1A / CBS 708.71 / DSM 1257 / FGSC 987).